We begin with the raw amino-acid sequence, 275 residues long: Autophagy-related protein 5 (275 aa).

A Glycyl lysine isopeptide (Lys-Gly) (interchain with G-Cter in lgg-3/ATG12) cross-link involves residue K129. Residues 221-231 (LSSSSSSSTDS) are compositionally biased toward low complexity. The disordered stretch occupies residues 221–241 (LSSSSSSSTDSQSEHPPRLIS).

This sequence belongs to the ATG5 family. In terms of assembly, most likely a component of a complex at least containing atg-5, lgg-3/ATG12, atg-16.1 and/or atg-16.2. Interacts with lgg-3/ATG12. Interacts with atg-16.1 (via N-terminus) and atg-16.2 (via N-terminus). Conjugated to lgg-3/ATG12; which is essential for autophagy.

It localises to the preautophagosomal structure membrane. In terms of biological role, involved in autophagic vesicle formation. Conjugation with lgg-3/ATG12, through a ubiquitin-like conjugating system involving atg-7 as an E1-like activating enzyme and atg-10 as an E2-like conjugating enzyme, is essential for its function. Most likely a component of an atg-5-lgg-3-atg-16 complex that promotes autophagosome formation by associating with lgg-2, but not lgg-1, at the preautophagosomal membrane. Probably, as part of an atg-5-lgg-3-atg-16 complex, required for lgg-1 lipidation; the complex acts as an E3-like enzyme promoting atg-3-mediated lgg-1 lipidation. Furthermore, association with atg-16.2 is required for the nucleation of lgg-1 positive autophagic vesicles. The polypeptide is Autophagy-related protein 5 (Caenorhabditis elegans).